Here is a 101-residue protein sequence, read N- to C-terminus: Urease subunit beta (101 aa).

The protein belongs to the urease beta subunit family. Heterotrimer of UreA (gamma), UreB (beta) and UreC (alpha) subunits. Three heterotrimers associate to form the active enzyme.

It is found in the cytoplasm. It catalyses the reaction urea + 2 H2O + H(+) = hydrogencarbonate + 2 NH4(+). It participates in nitrogen metabolism; urea degradation; CO(2) and NH(3) from urea (urease route): step 1/1. In Bradyrhizobium diazoefficiens (strain JCM 10833 / BCRC 13528 / IAM 13628 / NBRC 14792 / USDA 110), this protein is Urease subunit beta.